Here is a 387-residue protein sequence, read N- to C-terminus: Sedoheptulose-1,7-bisphosphatase, chloroplastic (387 aa).

Residues Cys-109 and Cys-114 are joined by a disulfide bond. Residues Asp-120, Glu-149, Asp-170, Leu-172, and Asp-173 each contribute to the Mg(2+) site. Residues 173–176 (DGSS), Tyr-284, and Lys-314 each bind substrate. Glu-320 lines the Mg(2+) pocket.

The protein belongs to the FBPase class 1 family. In terms of assembly, homodimer. It depends on Mg(2+) as a cofactor.

It is found in the plastid. The protein resides in the chloroplast. It carries out the reaction D-sedoheptulose 1,7-bisphosphate + H2O = D-sedoheptulose 7-phosphate + phosphate. The protein operates within carbohydrate biosynthesis; Calvin cycle. This Spinacia oleracea (Spinach) protein is Sedoheptulose-1,7-bisphosphatase, chloroplastic.